A 260-amino-acid polypeptide reads, in one-letter code: MQKDYQKLIVYLCDFLEKEVQKKGFKKVVYGLSGGLDSAVVGVLCQKVFKENAHALLMPSSVSMPESRTDALNLCEKFSIPYTEYSIAPYDKIFGSHFKDASLTRKGNFCARLRMAFLYDYSLKSDSLVIGTSNKSERMLGYGTLFGDLACAINPIGELFKTEVYELAYYLNIPKKILNKPPSADLFVGQSDEKDLGYPYSVIDPLLKDIEALFQTKPIHLETLIQLGYAEILVKNIISRIQKNAFKLELPTIAKRFNPE.

31 to 38 (GLSGGLDS) lines the ATP pocket. Asp-37 lines the Mg(2+) pocket. Arg-112 serves as a coordination point for deamido-NAD(+). Thr-132 is a binding site for ATP. Glu-137 serves as a coordination point for Mg(2+). ATP contacts are provided by Lys-161 and Ser-183.

Belongs to the NAD synthetase family. In terms of assembly, homodimer.

It carries out the reaction deamido-NAD(+) + NH4(+) + ATP = AMP + diphosphate + NAD(+) + H(+). The protein operates within cofactor biosynthesis; NAD(+) biosynthesis; NAD(+) from deamido-NAD(+) (ammonia route): step 1/1. Functionally, catalyzes the ATP-dependent amidation of deamido-NAD to form NAD. Uses ammonia as a nitrogen source. The polypeptide is NH(3)-dependent NAD(+) synthetase (Helicobacter pylori (strain J99 / ATCC 700824) (Campylobacter pylori J99)).